The following is a 110-amino-acid chain: Phosphoribosyl-AMP cyclohydrolase (110 aa).

Aspartate 80 contributes to the Mg(2+) binding site. Cysteine 81 provides a ligand contact to Zn(2+). Aspartate 82 and aspartate 84 together coordinate Mg(2+). Zn(2+) contacts are provided by cysteine 97 and cysteine 104.

This sequence belongs to the PRA-CH family. As to quaternary structure, homodimer. Mg(2+) serves as cofactor. Zn(2+) is required as a cofactor.

The protein localises to the cytoplasm. It catalyses the reaction 1-(5-phospho-beta-D-ribosyl)-5'-AMP + H2O = 1-(5-phospho-beta-D-ribosyl)-5-[(5-phospho-beta-D-ribosylamino)methylideneamino]imidazole-4-carboxamide. The protein operates within amino-acid biosynthesis; L-histidine biosynthesis; L-histidine from 5-phospho-alpha-D-ribose 1-diphosphate: step 3/9. Its function is as follows. Catalyzes the hydrolysis of the adenine ring of phosphoribosyl-AMP. This is Phosphoribosyl-AMP cyclohydrolase from Clostridium botulinum (strain Okra / Type B1).